The sequence spans 568 residues: Zinc finger protein 76 (568 aa).

A Glycyl lysine isopeptide (Lys-Gly) (interchain with G-Cter in SUMO2) cross-link involves residue Lys-24. 3 consecutive repeat copies span residues 34 to 45 (IQLEDGTTAYIH), 62 to 73 (VQLEDGSMAYIH), and 88 to 99 (VQLEDGSTAYIH). Residues 34-99 (IQLEDGTTAY…LEDGSTAYIH (66 aa)) form a 3 X 12 AA approximate repeats region. 7 consecutive C2H2-type zinc fingers follow at residues 165–189 (FRCGYKGCGRLYTTAHHLKVHERAH), 195–219 (YRCDFPSCGKAFATGYGLKSHVRTH), 225–249 (YKCPEELCSKAFKTSGDLQKHVRTH), 255–279 (FRCPFEGCGRSFTTSNIRKVHVRTH), 285–309 (YTCPEPHCGRGFTSATNYKNHVRIH), 315–339 (YVCTVPGCGKRFTEYSSLYKHHVVH), and 345–368 (YTCSSCGKTYRQTSTLAMHKRSAH). The disordered stretch occupies residues 365–402 (RSAHGELEATEESEQALYEQQQLEAASAAEESPPPKPT). Positions 379 to 395 (QALYEQQQLEAASAAEE) are enriched in low complexity.

This sequence belongs to the krueppel C2H2-type zinc-finger protein family.

Its subcellular location is the nucleus. Functionally, may be involved in transcriptional regulation. This Mus musculus (Mouse) protein is Zinc finger protein 76 (Znf76).